A 715-amino-acid chain; its full sequence is Fatty acid oxidation complex subunit alpha (715 aa).

The enoyl-CoA hydratase/isomerase stretch occupies residues 1–190 (MIYQGKAITV…KVGAVDAVVA (190 aa)). Residue D297 participates in substrate binding. The segment at 312 to 715 (KDVKLAAVLG…MAKNGQKFFG (404 aa)) is 3-hydroxyacyl-CoA dehydrogenase. Residues M325, D344, 401 to 403 (VVE), K408, and S430 each bind NAD(+). H451 functions as the For 3-hydroxyacyl-CoA dehydrogenase activity in the catalytic mechanism. N454 contributes to the NAD(+) binding site. N501 and Y660 together coordinate substrate.

The protein in the N-terminal section; belongs to the enoyl-CoA hydratase/isomerase family. This sequence in the C-terminal section; belongs to the 3-hydroxyacyl-CoA dehydrogenase family. Heterotetramer of two alpha chains (FadB) and two beta chains (FadA).

It catalyses the reaction a (3S)-3-hydroxyacyl-CoA + NAD(+) = a 3-oxoacyl-CoA + NADH + H(+). The catalysed reaction is a (3S)-3-hydroxyacyl-CoA = a (2E)-enoyl-CoA + H2O. It carries out the reaction a 4-saturated-(3S)-3-hydroxyacyl-CoA = a (3E)-enoyl-CoA + H2O. The enzyme catalyses (3S)-3-hydroxybutanoyl-CoA = (3R)-3-hydroxybutanoyl-CoA. It catalyses the reaction a (3Z)-enoyl-CoA = a 4-saturated (2E)-enoyl-CoA. The catalysed reaction is a (3E)-enoyl-CoA = a 4-saturated (2E)-enoyl-CoA. It participates in lipid metabolism; fatty acid beta-oxidation. In terms of biological role, involved in the aerobic and anaerobic degradation of long-chain fatty acids via beta-oxidation cycle. Catalyzes the formation of 3-oxoacyl-CoA from enoyl-CoA via L-3-hydroxyacyl-CoA. It can also use D-3-hydroxyacyl-CoA and cis-3-enoyl-CoA as substrate. This Pseudomonas paraeruginosa (strain DSM 24068 / PA7) (Pseudomonas aeruginosa (strain PA7)) protein is Fatty acid oxidation complex subunit alpha.